A 117-amino-acid polypeptide reads, in one-letter code: Immunoglobulin heavy variable 1-46 (117 aa).

Residues 1–19 (MDWTWRVFCLLAVAPGAHS) form the signal peptide. The segment at 20 to 44 (QVQLVQSGAEVKKPGASVKVSCKAS) is framework-1. An Ig-like domain is found at 20–117 (QVQLVQSGAE…EDTAVYYCAR (98 aa)). C41 and C115 form a disulfide bridge. Positions 45 to 52 (GYTFTSYY) are complementarity-determining-1. The interval 53–69 (MHWVRQAPGQGLEWMGI) is framework-2. The complementarity-determining-2 stretch occupies residues 70–77 (INPSGGST). Residues 78 to 115 (SYAQKFQGRVTMTRDTSTSTVYMELSSLRSEDTAVYYC) form a framework-3 region. Positions 116–117 (AR) are complementarity-determining-3.

In terms of assembly, immunoglobulins are composed of two identical heavy chains and two identical light chains; disulfide-linked.

Its subcellular location is the secreted. The protein resides in the cell membrane. V region of the variable domain of immunoglobulin heavy chains that participates in the antigen recognition. Immunoglobulins, also known as antibodies, are membrane-bound or secreted glycoproteins produced by B lymphocytes. In the recognition phase of humoral immunity, the membrane-bound immunoglobulins serve as receptors which, upon binding of a specific antigen, trigger the clonal expansion and differentiation of B lymphocytes into immunoglobulins-secreting plasma cells. Secreted immunoglobulins mediate the effector phase of humoral immunity, which results in the elimination of bound antigens. The antigen binding site is formed by the variable domain of one heavy chain, together with that of its associated light chain. Thus, each immunoglobulin has two antigen binding sites with remarkable affinity for a particular antigen. The variable domains are assembled by a process called V-(D)-J rearrangement and can then be subjected to somatic hypermutations which, after exposure to antigen and selection, allow affinity maturation for a particular antigen. The sequence is that of Immunoglobulin heavy variable 1-46 from Homo sapiens (Human).